The following is a 176-amino-acid chain: Ferritin, middle subunit (176 aa).

In terms of domain architecture, Ferritin-like diiron spans 7–156; the sequence is QNYHRDCEAA…DFITNLSRMD (150 aa). Residues Glu24, Glu59, His62, Glu104, and Gln138 each coordinate Fe cation.

This sequence belongs to the ferritin family. In terms of assembly, in liver, forms a heteromer consisting of middle and heavy subunits. In spleen, forms a homomer. The functional molecule forms a roughly spherical shell with a diameter of 12 nm and contains a central cavity into which the insoluble mineral iron core is deposited. As to expression, liver and spleen (at protein level).

It carries out the reaction 4 Fe(2+) + O2 + 4 H(+) = 4 Fe(3+) + 2 H2O. Its function is as follows. Stores iron in a soluble, non-toxic, readily available form. Important for iron homeostasis. Has ferroxidase activity. Iron is taken up in the ferrous form and deposited as ferric hydroxides after oxidation. The chain is Ferritin, middle subunit from Trematomus newnesi (Dusky notothen).